The following is a 362-amino-acid chain: UDP-N-acetylglucosamine--N-acetylmuramyl-(pentapeptide) pyrophosphoryl-undecaprenol N-acetylglucosamine transferase (362 aa).

Residues 15-17, Asn127, Arg165, Ser191, Ile247, 266-271, and Gln292 each bind UDP-N-acetyl-alpha-D-glucosamine; these read TGG and ALTVSE.

This sequence belongs to the glycosyltransferase 28 family. MurG subfamily.

The protein localises to the cell inner membrane. It catalyses the reaction di-trans,octa-cis-undecaprenyl diphospho-N-acetyl-alpha-D-muramoyl-L-alanyl-D-glutamyl-meso-2,6-diaminopimeloyl-D-alanyl-D-alanine + UDP-N-acetyl-alpha-D-glucosamine = di-trans,octa-cis-undecaprenyl diphospho-[N-acetyl-alpha-D-glucosaminyl-(1-&gt;4)]-N-acetyl-alpha-D-muramoyl-L-alanyl-D-glutamyl-meso-2,6-diaminopimeloyl-D-alanyl-D-alanine + UDP + H(+). The protein operates within cell wall biogenesis; peptidoglycan biosynthesis. In terms of biological role, cell wall formation. Catalyzes the transfer of a GlcNAc subunit on undecaprenyl-pyrophosphoryl-MurNAc-pentapeptide (lipid intermediate I) to form undecaprenyl-pyrophosphoryl-MurNAc-(pentapeptide)GlcNAc (lipid intermediate II). In Shewanella oneidensis (strain ATCC 700550 / JCM 31522 / CIP 106686 / LMG 19005 / NCIMB 14063 / MR-1), this protein is UDP-N-acetylglucosamine--N-acetylmuramyl-(pentapeptide) pyrophosphoryl-undecaprenol N-acetylglucosamine transferase.